Here is a 487-residue protein sequence, read N- to C-terminus: MVPVIALVGRPNVGKSTMFNRLTKTRDAIVGDLSGLTRDRQYGDASWQGRSFILIDTGGITGDEVGMDEKMAEQSLMAIEEADYVLFLVDARAGMTAADQMIAEHLRKRNKSAILVANKIDNIDADVARAEFSPLGMGNAIPVAGSQGRGINQLMESVLGHIPRDAEEEALDQEVAEGEEAVRIPGPSEKDGIKIAIIGRPNVGKSTLVNRMLGEERVVVYDQPGTTRDSIYIPFERDNEKYTFIDTAGVRKRGKIHEEVEKFSVVKTLQAIKDANVVIFVMDAREGVVDHDLNLLGFALEAGRAIVIALNKWDGMESGERDYVKTELERRLFFVDFADIHFISALHGTGVGHLYKSVQAAFKSAVTRWPTSRLTQILEDAVSEHQPPLVNGRRIKLRYAHLGGANPPLIVIHGNQTEKIPKSYSRYLENTYRRVLKLVGTPIRIEYKGGENPYEGKKNTLTDRQVNKKRRLMSHHKKAEKKRRDKR.

2 EngA-type G domains span residues 3–166 (PVIA…PRDA) and 193–366 (IKIA…KSAV). Residues 9–16 (GRPNVGKS), 56–60 (DTGGI), 118–121 (NKID), 199–206 (GRPNVGKS), 246–250 (DTAGV), and 311–314 (NKWD) each bind GTP. The KH-like domain maps to 367–451 (TRWPTSRLTQ…PIRIEYKGGE (85 aa)). The span at 448 to 461 (KGGENPYEGKKNTL) shows a compositional bias: basic and acidic residues. The disordered stretch occupies residues 448–487 (KGGENPYEGKKNTLTDRQVNKKRRLMSHHKKAEKKRRDKR). The segment covering 467-487 (NKKRRLMSHHKKAEKKRRDKR) has biased composition (basic residues).

The protein belongs to the TRAFAC class TrmE-Era-EngA-EngB-Septin-like GTPase superfamily. EngA (Der) GTPase family. In terms of assembly, associates with the 50S ribosomal subunit.

Functionally, GTPase that plays an essential role in the late steps of ribosome biogenesis. This Pseudomonas putida (strain W619) protein is GTPase Der.